Reading from the N-terminus, the 599-residue chain is Sulfite reductase [NADPH] flavoprotein alpha-component (599 aa).

The region spanning 64–202 (ITIISASQTG…AASEWRARVV (139 aa)) is the Flavodoxin-like domain. Residues 70–75 (SQTGNA), 117–120 (STQG), and 153–162 (LGDSSYEFFC) contribute to the FMN site. One can recognise an FAD-binding FR-type domain in the interval 234-448 (DAPLVASLSV…IEHNDNFRLP (215 aa)). Residues T322, A356, 386–389 (RLYS), 404–406 (TVG), Y410, and 419–422 (GGAS) each bind FAD. NADP(+) is bound by residues 519 to 520 (SR), 525 to 529 (KVYVQ), and D561. Residue Y599 coordinates FAD.

It belongs to the NADPH-dependent sulphite reductase flavoprotein subunit CysJ family. The protein in the N-terminal section; belongs to the flavodoxin family. This sequence in the C-terminal section; belongs to the flavoprotein pyridine nucleotide cytochrome reductase family. In terms of assembly, alpha(8)-beta(8). The alpha component is a flavoprotein, the beta component is a hemoprotein. It depends on FAD as a cofactor. Requires FMN as cofactor.

It catalyses the reaction hydrogen sulfide + 3 NADP(+) + 3 H2O = sulfite + 3 NADPH + 4 H(+). The protein operates within sulfur metabolism; hydrogen sulfide biosynthesis; hydrogen sulfide from sulfite (NADPH route): step 1/1. Functionally, component of the sulfite reductase complex that catalyzes the 6-electron reduction of sulfite to sulfide. This is one of several activities required for the biosynthesis of L-cysteine from sulfate. The flavoprotein component catalyzes the electron flow from NADPH -&gt; FAD -&gt; FMN to the hemoprotein component. The protein is Sulfite reductase [NADPH] flavoprotein alpha-component of Escherichia coli (strain K12).